The sequence spans 196 residues: Probable GTP-binding protein EngB (196 aa).

In terms of domain architecture, EngB-type G spans 22–193 (SLPEVAFVGR…LEEIRKAKGE (172 aa)). Residues 30 to 37 (GRSNVGKS), 57 to 61 (GRTQL), 75 to 78 (DLPG), 142 to 145 (TKSD), and 172 to 174 (FSA) each bind GTP. The Mg(2+) site is built by S37 and T59.

It belongs to the TRAFAC class TrmE-Era-EngA-EngB-Septin-like GTPase superfamily. EngB GTPase family. Mg(2+) is required as a cofactor.

Its function is as follows. Necessary for normal cell division and for the maintenance of normal septation. This is Probable GTP-binding protein EngB from Syntrophus aciditrophicus (strain SB).